A 2049-amino-acid chain; its full sequence is Non-reducing polyketide synthase hmp3 (2049 aa).

Positions 9–246 (LYFGDQTDSW…NELSIHALQH (238 aa)) are N-terminal acylcarrier protein transacylase (SAT) domain. One can recognise a Ketosynthase family 3 (KS3) domain in the interval 365–793 (PGRIAIVGMA…GGNASLILED (429 aa)). Active-site for beta-ketoacyl synthase activity residues include Cys-538, His-673, and His-712. The tract at residues 887-1146 (VFVFTGQGSH…VDFVGALGAL (260 aa)) is malonyl-CoA:ACP transacylase (MAT) domain. Residue Ser-978 is the For acyl/malonyl transferase activity of the active site. Residues 1265 to 1404 (QQIVEESSSP…AQTLQTSWNR (140 aa)) are N-terminal hotdog fold. One can recognise a PKS/mFAS DH domain in the interval 1265-1573 (QQIVEESSSP…FHEVSNNVLD (309 aa)). The product template (PT) domain stretch occupies residues 1269–1572 (EESSSPSLHV…SFHEVSNNVL (304 aa)). Residues 1425–1573 (GHRMLPSILY…FHEVSNNVLD (149 aa)) are C-terminal hotdog fold. The Carrier domain occupies 1626 to 1704 (SSESELFHTI…DLRNEFARSS (79 aa)). Residue Ser-1663 is modified to O-(pantetheine 4'-phosphoryl)serine. Residues 1700-1747 (FARSSTSTPPSKTFSEFSIVDATPESTRSSSRAPSEKKEPAPASEKSE) are disordered. A compositionally biased stretch (low complexity) spans 1703–1717 (SSTSTPPSKTFSEFS). The span at 1723-1732 (PESTRSSSRA) shows a compositional bias: polar residues. Residues 1733-1747 (PSEKKEPAPASEKSE) are compositionally biased toward basic and acidic residues. Positions 1761–1951 (SPLPSARITL…KRTAIIWAKK (191 aa)) are thioesterase (TE) domain.

The protein operates within secondary metabolite biosynthesis. Its function is as follows. Non-reducing polyketide synthase; part of the gene cluster that mediates the biosynthesis of hypothemycin, a resorcylic acid lactone (RAL) that irreversibly inhibits a subset of protein kinases with a conserved cysteine in the ATP binding site such as human ERK2. The first step is performed by both PKSs hmp3 and hmp8 and leads to the production of 7',8'-dehydrozearalenol (DHZ). The highly reducing PKS hpm8 synthesizes the reduced hexaketide (7S,11S,2E,8E)-7,11-dihydroxy-dodeca-2,8-dienoate, which is transferred downstream to the non-reducing PKS hpm3. Hpm3 then extends the reduced hexaketide to a nonaketide, after which regioselective cyclization and macrolactonization affords DHZ. The next step is the conversion of DHZ into aigialomycin C and is performed by the O-methyltransferase hmp5, the FAD-binding monooxygenase hmp7, and the cytochrome P450 monooxygenase hmp1. The wide substrate tolerance of the hmp5 and hmp7 implies that the reactions from DHZ to aigialomycin C can occur in any order. The steps from aigialomycin C to hypothemycin are less well established. The FAD-linked oxidoreductase hmp9 presumably catalyzes oxidation of the C-6' hydroxyl to a ketone. The timing of this oxidation is important, since the resulting enone functional group is a Michael acceptor that can react spontaneously with glutathione, an abundant metabolite in fungal cells. The glutathione S-transferase hmp2 catalyzes cis-trans isomerization of the 7',8' double bond with equilibrium favoring the trans isomer. The hpm6-encoded transporter might preferentially pump hypothemycin out of the cell relative to the trans isomer aigialomycin A. The cis-to-trans isomerization may be coupled with C-4' hydroxylation, since all known hypothemycin analogs containing the enone functional group also have hydroxyl groups at both C-4' and C-5'. The polypeptide is Non-reducing polyketide synthase hmp3 (Hypomyces subiculosus (Nectria subiculosa)).